Reading from the N-terminus, the 476-residue chain is Arginine biosynthesis bifunctional protein ArgJ, mitochondrial (476 aa).

Substrate is bound by residues Thr193, Lys219, Thr237, Glu337, Asn471, and Ser476. Thr237 functions as the Nucleophile in the catalytic mechanism.

The protein belongs to the ArgJ family. As to quaternary structure, heterodimer of an alpha and a beta chain. In terms of processing, the alpha and beta chains are autoproteolytically processed from a single precursor protein within the mitochondrion.

The protein localises to the mitochondrion matrix. It carries out the reaction N(2)-acetyl-L-ornithine + L-glutamate = N-acetyl-L-glutamate + L-ornithine. The catalysed reaction is L-glutamate + acetyl-CoA = N-acetyl-L-glutamate + CoA + H(+). It functions in the pathway amino-acid biosynthesis; L-arginine biosynthesis; L-ornithine and N-acetyl-L-glutamate from L-glutamate and N(2)-acetyl-L-ornithine (cyclic): step 1/1. The protein operates within amino-acid biosynthesis; L-arginine biosynthesis; N(2)-acetyl-L-ornithine from L-glutamate: step 1/4. Catalyzes two activities which are involved in the cyclic version of arginine biosynthesis: the synthesis of acetylglutamate from glutamate and acetyl-CoA, and of ornithine by transacetylation between acetylornithine and glutamate. The chain is Arginine biosynthesis bifunctional protein ArgJ, mitochondrial from Cryptococcus neoformans var. neoformans serotype D (strain JEC21 / ATCC MYA-565) (Filobasidiella neoformans).